Consider the following 33-residue polypeptide: Mu-theraphotoxin-Osp1b (33 aa).

3 disulfide bridges follow: C2–C17, C9–C22, and C16–C29.

The protein belongs to the neurotoxin 10 (Hwtx-1) family. 22 (Htx-4) subfamily. Expressed by the venom gland.

The protein resides in the secreted. Voltage-gated sodium channel Nav1.7/SCN9A inhibitor. In Orphnaecus sp. (strain Maanghit-Cave/Philippines) (Tarantula spider), this protein is Mu-theraphotoxin-Osp1b.